The primary structure comprises 767 residues: MFPQNRPPTHLQASVATGAASGPPQSLKLTYPETLDRIKEEFQFLQSQYHSLKLECEKLATEKTEIQRHYVMYYEMSYGLNIEMHKQTEIAKRLNVICAQLVPFLSQEHQQQVVQAVERAKQVTMAELNAAIGVRFIPPQLTVHQLQAQHLSHHAPPIPLTPHPSSLQHPGLAAATSASSLLGYLVFLAFRHNLLQKRAADAEHRERDPGPSCLTLPNGERVPTLSDYLNSNTKRKTEEKDFGTDYGSDADRSEDNLVVDEDPASPHSVHSYSSRENGVDKPTLQRKDPPPASPNSMTSSSSVSPSRSKDIPSQQVEKAGTPGLKSSTPNSQSDLNTPGPSGTSASQFRSIATKPAIDSLALGLRTPLGGQGGYPAAFSIAHPSVNADGAGAYAGLHLMSPQINGATAAGTYGRSPLVSYDPHAHMRGLGSAIPGSASGKPAYSFHVSADGQMQPVPFPPDALIGSGIPRHARQLHVLNHGEVVCAVTISNSTRHVYTGGKGCVKVWDVGQPGTKTPVAQLDCLNRDNYIRSCKLLPDGRSLIVGGEASTLSIWDLASPTPRIKAELTSSAPACYALAISPDAKVCFSCCSDGNIVVWDLQNQTLVRQFQGHTDGASCIDISHDGTKLWTGGLDNTVRCWDLREGRQLQQHDFNSQIFSLGYCPTGEWLAVGMESSNIEVLHVSKPDKYQLHLHESCVLSLQFASCGKWFVSTGKDNLLNAWRTPYGASIFQSKESSSVLSCDVSTDDQFIVTGSGDKKATVYEVIY.

Disordered regions lie at residues 1–26 and 200–346; these read MFPQ…PPQS and ADAE…TSAS. 3 stretches are compositionally biased toward basic and acidic residues: residues 200 to 209, 235 to 255, and 277 to 289; these read ADAEHRERDP, RKTE…RSED, and NGVD…RKDP. A CCN domain region spans residues 212 to 274; the sequence is SCLTLPNGER…SPHSVHSYSS (63 aa). A compositionally biased stretch (low complexity) spans 294 to 306; it reads PNSMTSSSSVSPS. Polar residues predominate over residues 324–346; it reads LKSSTPNSQSDLNTPGPSGTSAS. WD repeat units lie at residues 467–498, 525–555, 569–599, 611–641, 693–723, and 734–764; these read GIPR…HVYT, NRDN…SIWD, SSAP…VVWD, GHTD…RCWD, LHES…NAWR, and KESS…TVYE.

The protein belongs to the WD repeat Groucho/TLE family. In terms of processing, ubiquitinated by XIAP/BIRC4. In terms of tissue distribution, abundantly expressed in brain, lung, testis and ovary in comparison with liver, heart, kidney and spleen. Ubiquitously expressed in the developing embryo. Present in unfertilized and fertilized eggs.

It is found in the nucleus. Nuclear effector molecule. This chain is Transducin-like enhancer protein 1 (esg1), found in Xenopus laevis (African clawed frog).